Consider the following 211-residue polypeptide: Thiamine-phosphate synthase (211 aa).

Residues 35 to 39 (QLRDK) and Asn-67 each bind 4-amino-2-methyl-5-(diphosphooxymethyl)pyrimidine. Mg(2+)-binding residues include Asp-68 and Asp-87. Position 106 (Ser-106) interacts with 4-amino-2-methyl-5-(diphosphooxymethyl)pyrimidine. 132–134 (TGS) is a binding site for 2-[(2R,5Z)-2-carboxy-4-methylthiazol-5(2H)-ylidene]ethyl phosphate. Position 135 (Lys-135) interacts with 4-amino-2-methyl-5-(diphosphooxymethyl)pyrimidine. 2-[(2R,5Z)-2-carboxy-4-methylthiazol-5(2H)-ylidene]ethyl phosphate-binding positions include Gly-163 and 183–184 (IS).

It belongs to the thiamine-phosphate synthase family. Mg(2+) is required as a cofactor.

It carries out the reaction 2-[(2R,5Z)-2-carboxy-4-methylthiazol-5(2H)-ylidene]ethyl phosphate + 4-amino-2-methyl-5-(diphosphooxymethyl)pyrimidine + 2 H(+) = thiamine phosphate + CO2 + diphosphate. It catalyses the reaction 2-(2-carboxy-4-methylthiazol-5-yl)ethyl phosphate + 4-amino-2-methyl-5-(diphosphooxymethyl)pyrimidine + 2 H(+) = thiamine phosphate + CO2 + diphosphate. The catalysed reaction is 4-methyl-5-(2-phosphooxyethyl)-thiazole + 4-amino-2-methyl-5-(diphosphooxymethyl)pyrimidine + H(+) = thiamine phosphate + diphosphate. Its pathway is cofactor biosynthesis; thiamine diphosphate biosynthesis; thiamine phosphate from 4-amino-2-methyl-5-diphosphomethylpyrimidine and 4-methyl-5-(2-phosphoethyl)-thiazole: step 1/1. In terms of biological role, condenses 4-methyl-5-(beta-hydroxyethyl)thiazole monophosphate (THZ-P) and 2-methyl-4-amino-5-hydroxymethyl pyrimidine pyrophosphate (HMP-PP) to form thiamine monophosphate (TMP). The sequence is that of Thiamine-phosphate synthase from Methanoculleus marisnigri (strain ATCC 35101 / DSM 1498 / JR1).